Reading from the N-terminus, the 449-residue chain is Protein cortex (449 aa).

6 WD repeats span residues T108–G148, Y149–S188, N198–R237, D283–T327, T345–G382, and S386–K425. The short motif at S386–S397 is the D-box element.

This sequence belongs to the WD repeat CORT family.

It is found in the cytoplasm. Controls wing pigmentation patterning by regulating scale cell development, thereby playing a key role in mimicry and crypsis. Probably acts as an activator of the anaphase promoting complex/cyclosome (APC/C) that promotes the ubiquitin ligase activity and substrate specificity of the APC/C. The protein is Protein cortex of Heliconius erato (Crimson patched longwing butterfly).